Here is a 126-residue protein sequence, read N- to C-terminus: Urease subunit beta (126 aa).

This sequence belongs to the urease beta subunit family. As to quaternary structure, heterotrimer of UreA (gamma), UreB (beta) and UreC (alpha) subunits. Three heterotrimers associate to form the active enzyme.

The protein resides in the cytoplasm. The enzyme catalyses urea + 2 H2O + H(+) = hydrogencarbonate + 2 NH4(+). It participates in nitrogen metabolism; urea degradation; CO(2) and NH(3) from urea (urease route): step 1/1. The sequence is that of Urease subunit beta from Gloeothece citriformis (strain PCC 7424) (Cyanothece sp. (strain PCC 7424)).